The chain runs to 487 residues: DNA ligase (487 aa).

Catalysis depends on lysine 159, which acts as the N6-AMP-lysine intermediate. 3 residues coordinate ATP: arginine 164, arginine 182, and glutamate 217. Residue glutamate 217 participates in a divalent metal cation binding. The segment at 229–237 (EGLDFLFDA) is interaction with the sliding clamp. Residue glutamate 344 participates in a divalent metal cation binding. Residues arginine 359 and lysine 365 each coordinate ATP.

This sequence belongs to the ATP-dependent DNA ligase family. Interacts with the sliding clamp. A divalent metal cation is required as a cofactor.

It carries out the reaction ATP + (deoxyribonucleotide)n-3'-hydroxyl + 5'-phospho-(deoxyribonucleotide)m = (deoxyribonucleotide)n+m + AMP + diphosphate.. Its function is as follows. DNA ligase, which is expressed in the early stage of lytic development, has been implicated in T4 DNA synthesis and genetic recombination. It may also play a role in T4 DNA repair. This chain is DNA ligase (30), found in Enterobacteria phage T4 (Bacteriophage T4).